A 185-amino-acid polypeptide reads, in one-letter code: NAD(P)H-quinone oxidoreductase subunit J (185 aa).

This sequence belongs to the complex I 30 kDa subunit family. In terms of assembly, NDH-1 can be composed of about 15 different subunits; different subcomplexes with different compositions have been identified which probably have different functions.

It localises to the cellular thylakoid membrane. It carries out the reaction a plastoquinone + NADH + (n+1) H(+)(in) = a plastoquinol + NAD(+) + n H(+)(out). The enzyme catalyses a plastoquinone + NADPH + (n+1) H(+)(in) = a plastoquinol + NADP(+) + n H(+)(out). Functionally, NDH-1 shuttles electrons from an unknown electron donor, via FMN and iron-sulfur (Fe-S) centers, to quinones in the respiratory and/or the photosynthetic chain. The immediate electron acceptor for the enzyme in this species is believed to be plastoquinone. Couples the redox reaction to proton translocation, and thus conserves the redox energy in a proton gradient. Cyanobacterial NDH-1 also plays a role in inorganic carbon-concentration. In Prochlorococcus marinus (strain MIT 9303), this protein is NAD(P)H-quinone oxidoreductase subunit J.